Reading from the N-terminus, the 770-residue chain is Signal transducer and activator of transcription 3 (770 aa).

A2 is subject to N-acetylalanine. N6-acetyllysine is present on residues K49 and K87. The Essential for nuclear import signature appears at 150 to 162 (DVRKRVQDLEQKM). The 91-residue stretch at 580 to 670 (WNEGYIMGFI…DATNILVSPL (91 aa)) folds into the SH2 domain. An allysine; alternate mark is found at K601, K615, and K631. N6-acetyllysine; alternate is present on residues K601, K615, and K631. Y640 is modified (phosphotyrosine; by TYK2). An Allysine; alternate modification is found at K685. K685 is subject to N6-acetyllysine; alternate. Y705 is modified (phosphotyrosine; by FER and PTK6). Residue K707 is modified to N6-acetyllysine. A Phosphothreonine modification is found at T714. The residue at position 727 (S727) is a Phosphoserine; by DYRK2, NLK, NEK6, IRAK1, RPS6KA5, ZIPK/DAPK3 and PKC/PRKCE.

This sequence belongs to the transcription factor STAT family. Forms a homodimer or a heterodimer with a related family member (at least STAT1). Component of a promoter-binding complex composed of STAT3, NFATC3 and NFATC4; complex formation is enhanced by calcineurin. Interacts with IL31RA, NCOA1, PELP1, SIPAR, SOCS7, STATIP1 and TMF1. Interacts with IL23R in presence of IL23. Interacts (via SH2 domain) with NLK. Interacts with ARL2BP; the interaction is enhanced by LIF and JAK1 expression. Interacts with KPNA4 and KPNA5; KPNA4 may be the primary mediator of nuclear import. Interacts with CAV2; the interaction is increased on insulin-induced tyrosine phosphorylation of CAV2 and leads to STAT3 activation. Interacts with ARL2BP; interaction is enhanced with ARL2. Interacts with NEK6. Binds to CDK9 when activated and nuclear. Interacts with BMX. Interacts with ZIPK/DAPK3. Interacts with PIAS3; the interaction occurs on stimulation by IL6, CNTF or OSM and inhibits the DNA binding activity of STAT3. In prostate cancer cells, interacts with PRKCE and promotes DNA binding activity of STAT3. Interacts with STMN3, antagonizing its microtubule-destabilizing activity. Interacts with the 'Lys-129' acetylated form of BIRC5/survivin. Interacts with FER. Interacts (via SH2 domain) with EIF2AK2/PKR (via the kinase catalytic domain). Interacts with INPP5F; the interaction is independent of STAT3 Tyr-705 phosphorylation status. Interacts with FGFR4. Interacts with OCIAD1 and OCIAD2. Interacts (unphosphorylated or phosphorylated at Ser-727) with PHB1. Interacts and may form heterodimers with NHLH1. Found in a complex with SLC39A6, SLC39A10 and with the 'Ser-727' phosphorylated form of STAT3 throughout mitosis. Interacts (when acetylated) with EP300 (via bromo domain); interaction takes place following STAT3 acetylation by EP300 and promotes enhanceosome assembly. Interacts (when acetylated) with BRD2 (via bromo domain); interaction promotes STAT3 recruitment to chromatin and T-helper Th17 cell differentiation. Interacts with FAM220A/SIPAR; the interaction occurs in both the nucleus and the cytoplasm, is enhanced by IL6 and promotes STAT3 dephosphorylation. Interacts in both unphosphorylated and phosphorylated forms with FAM220A but interacts preferentially in the phosphorylated form in the nucleus. Interacts with PTPN2; the interaction is promoted by FAM220A and leads to STAT3 dephosphorylation which negatively regulates STAT3 transcriptional activator activity. In terms of processing, activated through tyrosine phosphorylation by BMX. Tyrosine phosphorylated in response to IL6, IL11, CNTF, LIF, KITLG/SCF, CSF1, EGF, PDGF, IFN-alpha and OSM. Activated KIT promotes phosphorylation on tyrosine residues and subsequent translocation to the nucleus. Tyrosine phosphorylated in response to constitutively activated FGFR1, FGFR2, FGFR3 and FGFR4. Phosphorylated on serine upon DNA damage, probably by ATM or ATR. Serine phosphorylation is important for the formation of stable DNA-binding STAT3 homodimers and maximal transcriptional activity. ARL2BP may participate in keeping the phosphorylated state of STAT3 within the nucleus. Tyrosine phosphorylated upon stimulation with EGF. Upon LPS challenge, phosphorylated within the nucleus by IRAK1. Phosphorylated on Ser-727 by RPS6KA5. Dephosphorylation on tyrosine residues by PTPN2 negatively regulates IL6/interleukin-6 signaling. Phosphorylation at Tyr-705 by FER, isoform M2 of PKM (PKM2) or PTK6 leads to an increase of its transcriptional activity. Phosphorylation at Tyr-705 is increased in the presence of calcineurin. Phosphorylation at Tyr-640 by TYK2 negatively regulates transcriptional activity. Acetylated on lysine residues by EP300/p300, promoting its activation. Acetylation at Lys-49 and Lys-87 by EP300/p300 promotes its activation. Acetylation at Lys-87 by EP300/p300 promotes its association with BRD2 and recruitment to chromatin. Deacetylated at Lys-49 and Lys-87 by HDAC1. Acetylation at Lys-685 by EP300/p300 promotes its homodimerization and activation. Deacetylated at Lys-685 by HDAC3. Acetylated on lysine residues by CREBBP. Deacetylation by LOXL3 leads to disrupt STAT3 dimerization and inhibit STAT3 transcription activity. Oxidation of lysine residues to allysine on STAT3 preferentially takes place on lysine residues that are acetylated. Post-translationally, some lysine residues are oxidized to allysine by LOXL3, leading to disrupt STAT3 dimerization and inhibit STAT3 transcription activity. Oxidation of lysine residues to allysine on STAT3 preferentially takes place on lysine residues that are acetylated. As to expression, detected in lung, heart, oviduct, ovary, uterus and kidney (at protein level). Detected in ovary, oviduct, and at lower levels in uterus and lung.

It localises to the cytoplasm. The protein localises to the nucleus. Functionally, signal transducer and transcription activator that mediates cellular responses to interleukins, KITLG/SCF, LEP and other growth factors. Once activated, recruits coactivators, such as NCOA1 or MED1, to the promoter region of the target gene. May mediate cellular responses to activated FGFR1, FGFR2, FGFR3 and FGFR4. Upon activation of IL6ST/gp130 signaling by interleukin-6 (IL6), binds to the IL6-responsive elements identified in the promoters of various acute-phase protein genes. Activated by IL31 through IL31RA. Acts as a regulator of inflammatory response by regulating differentiation of naive CD4(+) T-cells into T-helper Th17 or regulatory T-cells (Treg): acetylation promotes its transcription activity and cell differentiation while deacetylation and oxidation of lysine residues by LOXL3 inhibits differentiation. Involved in cell cycle regulation by inducing the expression of key genes for the progression from G1 to S phase, such as CCND1. Mediates the effects of LEP on melanocortin production, body energy homeostasis and lactation. May play an apoptotic role by transctivating BIRC5 expression under LEP activation. Cytoplasmic STAT3 represses macroautophagy by inhibiting EIF2AK2/PKR activity. Plays a crucial role in basal beta cell functions, such as regulation of insulin secretion. Following JAK/STAT signaling activation and as part of a complex with NFATC3 and NFATC4, binds to the alpha-beta E4 promoter region of CRYAB and activates transcription in cardiomyocytes. Plays an important role in host defense in methicillin-resistant S.aureus lung infection by regulating the expression of the antimicrobial lectin REG3G. The chain is Signal transducer and activator of transcription 3 (STAT3) from Sus scrofa (Pig).